The chain runs to 328 residues: dITP/XTP pyrophosphatase (328 aa).

Residues Met-1–Ile-129 form a unknown region. The segment at Ile-130–Gln-324 is NTP pyrophosphatase. Thr-134–Lys-139 is a substrate binding site. Catalysis depends on Asp-196, which acts as the Proton acceptor. Asp-196 is a Mg(2+) binding site. Residues Ser-197, Phe-280–Asp-283, Lys-303, and His-308–Arg-309 each bind substrate.

It belongs to the HAM1 NTPase family. Homodimer. Mg(2+) is required as a cofactor.

It carries out the reaction XTP + H2O = XMP + diphosphate + H(+). The enzyme catalyses dITP + H2O = dIMP + diphosphate + H(+). It catalyses the reaction ITP + H2O = IMP + diphosphate + H(+). Its function is as follows. Pyrophosphatase that catalyzes the hydrolysis of nucleoside triphosphates to their monophosphate derivatives, with a high preference for the non-canonical purine nucleotides XTP (xanthosine triphosphate), dITP (deoxyinosine triphosphate) and ITP. Seems to function as a house-cleaning enzyme that removes non-canonical purine nucleotides from the nucleotide pool, thus preventing their incorporation into DNA/RNA and avoiding chromosomal lesions. This chain is dITP/XTP pyrophosphatase, found in Streptococcus pyogenes serotype M3 (strain ATCC BAA-595 / MGAS315).